The sequence spans 369 residues: Anhydro-N-acetylmuramic acid kinase (369 aa).

12–19 (GTSLDGVD) contacts ATP.

This sequence belongs to the anhydro-N-acetylmuramic acid kinase family.

The enzyme catalyses 1,6-anhydro-N-acetyl-beta-muramate + ATP + H2O = N-acetyl-D-muramate 6-phosphate + ADP + H(+). It functions in the pathway amino-sugar metabolism; 1,6-anhydro-N-acetylmuramate degradation. The protein operates within cell wall biogenesis; peptidoglycan recycling. Its function is as follows. Catalyzes the specific phosphorylation of 1,6-anhydro-N-acetylmuramic acid (anhMurNAc) with the simultaneous cleavage of the 1,6-anhydro ring, generating MurNAc-6-P. Is required for the utilization of anhMurNAc either imported from the medium or derived from its own cell wall murein, and thus plays a role in cell wall recycling. The polypeptide is Anhydro-N-acetylmuramic acid kinase (Escherichia coli O8 (strain IAI1)).